A 259-amino-acid polypeptide reads, in one-letter code: Probable dihydroorotate dehydrogenase B (NAD(+)), electron transfer subunit (259 aa).

Positions 1–89 constitute an FAD-binding FR-type domain; sequence MLPLNATITQ…RGPFGKGFTL (89 aa). [2Fe-2S] cluster is bound by residues C211, C216, C219, and C229.

This sequence belongs to the PyrK family. As to quaternary structure, heterotetramer of 2 PyrK and 2 PyrD type B subunits. [2Fe-2S] cluster serves as cofactor. FAD is required as a cofactor.

It functions in the pathway pyrimidine metabolism; UMP biosynthesis via de novo pathway; orotate from (S)-dihydroorotate (NAD(+) route): step 1/1. Its function is as follows. Responsible for channeling the electrons from the oxidation of dihydroorotate from the FMN redox center in the PyrD type B subunit to the ultimate electron acceptor NAD(+). This Methanosarcina mazei (strain ATCC BAA-159 / DSM 3647 / Goe1 / Go1 / JCM 11833 / OCM 88) (Methanosarcina frisia) protein is Probable dihydroorotate dehydrogenase B (NAD(+)), electron transfer subunit.